We begin with the raw amino-acid sequence, 307 residues long: Aspartate carbamoyltransferase catalytic subunit (307 aa).

Arg55 and Thr56 together coordinate carbamoyl phosphate. Residue Lys85 participates in L-aspartate binding. Carbamoyl phosphate-binding residues include Arg106, His134, and Gln137. Positions 167 and 228 each coordinate L-aspartate. Residues Leu266 and Pro267 each contribute to the carbamoyl phosphate site.

This sequence belongs to the aspartate/ornithine carbamoyltransferase superfamily. ATCase family. Heterododecamer (2C3:3R2) of six catalytic PyrB chains organized as two trimers (C3), and six regulatory PyrI chains organized as three dimers (R2).

It carries out the reaction carbamoyl phosphate + L-aspartate = N-carbamoyl-L-aspartate + phosphate + H(+). Its pathway is pyrimidine metabolism; UMP biosynthesis via de novo pathway; (S)-dihydroorotate from bicarbonate: step 2/3. Functionally, catalyzes the condensation of carbamoyl phosphate and aspartate to form carbamoyl aspartate and inorganic phosphate, the committed step in the de novo pyrimidine nucleotide biosynthesis pathway. The protein is Aspartate carbamoyltransferase catalytic subunit of Tolumonas auensis (strain DSM 9187 / NBRC 110442 / TA 4).